Consider the following 107-residue polypeptide: UPF0060 membrane protein PSHAa1175 (107 aa).

4 consecutive transmembrane segments (helical) span residues 3 to 23 (IFGLFLITALAEIIGCYLPYL), 30 to 50 (SVWLLVPAALSLAIFAWLLSL), 60 to 80 (AAYGGVYIFMAILWLWAVDGI), and 84 to 104 (TWDLVGSGVALVGMAIIMFAP).

Belongs to the UPF0060 family.

It is found in the cell inner membrane. In Pseudoalteromonas translucida (strain TAC 125), this protein is UPF0060 membrane protein PSHAa1175.